The sequence spans 389 residues: G2/M cell-cycle inhibitor DR6 (389 aa).

It belongs to the Roseolovirus DR6 family.

The protein localises to the host nucleus. Functionally, inhibits the host G2/M cell-cycle progression in a p53-independent manner. In Homo sapiens (Human), this protein is G2/M cell-cycle inhibitor DR6 (DR6L).